A 755-amino-acid polypeptide reads, in one-letter code: Polyribonucleotide nucleotidyltransferase (755 aa).

Mg(2+) contacts are provided by Asp493 and Asp499. Residues 560–619 (PRIMTIQIPVDKIGALIGPGGKTIRNICETTGAQIDIEDDGRVFITTPDGAAARQAISMI) form the KH domain. The 70-residue stretch at 629-698 (GDIFLGKVVS…TTGKISLSRR (70 aa)) folds into the S1 motif domain. The tract at residues 699 to 755 (AVLTGETPEERKAAGAAPRPRPREEQRGGRDEPRSLRDELRGPRREGDRPRPRRRDD) is disordered. Residues 719-755 (RPREEQRGGRDEPRSLRDELRGPRREGDRPRPRRRDD) are compositionally biased toward basic and acidic residues.

It belongs to the polyribonucleotide nucleotidyltransferase family. It depends on Mg(2+) as a cofactor.

Its subcellular location is the cytoplasm. It carries out the reaction RNA(n+1) + phosphate = RNA(n) + a ribonucleoside 5'-diphosphate. Functionally, involved in mRNA degradation. Catalyzes the phosphorolysis of single-stranded polyribonucleotides processively in the 3'- to 5'-direction. This Chloroflexus aurantiacus (strain ATCC 29366 / DSM 635 / J-10-fl) protein is Polyribonucleotide nucleotidyltransferase.